We begin with the raw amino-acid sequence, 108 residues long: Integration host factor subunit alpha (108 aa).

Belongs to the bacterial histone-like protein family. Heterodimer of an alpha and a beta chain.

Its function is as follows. This protein is one of the two subunits of integration host factor, a specific DNA-binding protein that functions in genetic recombination as well as in transcriptional and translational control. The polypeptide is Integration host factor subunit alpha (Bartonella henselae (strain ATCC 49882 / DSM 28221 / CCUG 30454 / Houston 1) (Rochalimaea henselae)).